The primary structure comprises 243 residues: Type III pantothenate kinase (243 aa).

6 to 13 serves as a coordination point for ATP; it reads DGGNTFIK. Residues Tyr87 and 94–97 contribute to the substrate site; that span reads GKDR. The active-site Proton acceptor is Asp96. Asp117 contributes to the K(+) binding site. Residue Thr120 coordinates ATP. Thr172 contacts substrate.

This sequence belongs to the type III pantothenate kinase family. Homodimer. NH4(+) serves as cofactor. It depends on K(+) as a cofactor.

The protein localises to the cytoplasm. It catalyses the reaction (R)-pantothenate + ATP = (R)-4'-phosphopantothenate + ADP + H(+). The protein operates within cofactor biosynthesis; coenzyme A biosynthesis; CoA from (R)-pantothenate: step 1/5. Functionally, catalyzes the phosphorylation of pantothenate (Pan), the first step in CoA biosynthesis. In Christiangramia forsetii (strain DSM 17595 / CGMCC 1.15422 / KT0803) (Gramella forsetii), this protein is Type III pantothenate kinase.